The primary structure comprises 132 residues: Small ribosomal subunit protein uS8 (132 aa).

It belongs to the universal ribosomal protein uS8 family. As to quaternary structure, part of the 30S ribosomal subunit. Contacts proteins S5 and S12.

Functionally, one of the primary rRNA binding proteins, it binds directly to 16S rRNA central domain where it helps coordinate assembly of the platform of the 30S subunit. The polypeptide is Small ribosomal subunit protein uS8 (Rhodococcus jostii (strain RHA1)).